Reading from the N-terminus, the 189-residue chain is Large ribosomal subunit protein uL13 (189 aa).

This sequence belongs to the universal ribosomal protein uL13 family.

This is Large ribosomal subunit protein uL13 (rpl13a) from Salmo trutta (Brown trout).